The primary structure comprises 754 residues: 1,4-alpha-glucan branching enzyme GlgB (754 aa).

The active-site Nucleophile is D431. E484 serves as the catalytic Proton donor.

The protein belongs to the glycosyl hydrolase 13 family. GlgB subfamily. Monomer.

It carries out the reaction Transfers a segment of a (1-&gt;4)-alpha-D-glucan chain to a primary hydroxy group in a similar glucan chain.. It participates in glycan biosynthesis; glycogen biosynthesis. Catalyzes the formation of the alpha-1,6-glucosidic linkages in glycogen by scission of a 1,4-alpha-linked oligosaccharide from growing alpha-1,4-glucan chains and the subsequent attachment of the oligosaccharide to the alpha-1,6 position. This Prochlorococcus marinus (strain MIT 9515) protein is 1,4-alpha-glucan branching enzyme GlgB.